A 178-amino-acid chain; its full sequence is ATP-dependent protease subunit HslV (178 aa).

Thr7 is a catalytic residue. Na(+)-binding residues include Gly162, Cys165, and Thr168.

It belongs to the peptidase T1B family. HslV subfamily. A double ring-shaped homohexamer of HslV is capped on each side by a ring-shaped HslU homohexamer. The assembly of the HslU/HslV complex is dependent on binding of ATP.

Its subcellular location is the cytoplasm. The catalysed reaction is ATP-dependent cleavage of peptide bonds with broad specificity.. Its activity is regulated as follows. Allosterically activated by HslU binding. Protease subunit of a proteasome-like degradation complex believed to be a general protein degrading machinery. In Cupriavidus taiwanensis (strain DSM 17343 / BCRC 17206 / CCUG 44338 / CIP 107171 / LMG 19424 / R1) (Ralstonia taiwanensis (strain LMG 19424)), this protein is ATP-dependent protease subunit HslV.